We begin with the raw amino-acid sequence, 470 residues long: Cysteine--tRNA ligase (470 aa).

C28 contacts Zn(2+). The 'HIGH' region signature appears at 30-40 (PTVYNYIHIGN). C212, H237, and E241 together coordinate Zn(2+). Positions 271–275 (KMSKS) match the 'KMSKS' region motif. Position 274 (K274) interacts with ATP.

The protein belongs to the class-I aminoacyl-tRNA synthetase family. In terms of assembly, monomer. It depends on Zn(2+) as a cofactor.

It localises to the cytoplasm. It catalyses the reaction tRNA(Cys) + L-cysteine + ATP = L-cysteinyl-tRNA(Cys) + AMP + diphosphate. The protein is Cysteine--tRNA ligase of Levilactobacillus brevis (strain ATCC 367 / BCRC 12310 / CIP 105137 / JCM 1170 / LMG 11437 / NCIMB 947 / NCTC 947) (Lactobacillus brevis).